The following is a 303-amino-acid chain: Peptidyl-prolyl isomerase CWC27 (303 aa).

A PPIase cyclophilin-type domain is found at 7-153; sequence ASGKCVLYTT…AEVTIPYFDG (147 aa). Disordered regions lie at residues 155 to 195 and 208 to 274; these read SGQK…PPLD and ERLT…TDLA.

This sequence belongs to the cyclophilin-type PPIase family. CWC27 subfamily. Associated with the spliceosome.

It localises to the cytoplasm. Its subcellular location is the nucleus. It catalyses the reaction [protein]-peptidylproline (omega=180) = [protein]-peptidylproline (omega=0). PPIases accelerate the folding of proteins. It catalyzes the cis-trans isomerization of proline imidic peptide bonds in oligopeptides. Involved in pre-mRNA splicing. The polypeptide is Peptidyl-prolyl isomerase CWC27 (CWC27) (Eremothecium gossypii (strain ATCC 10895 / CBS 109.51 / FGSC 9923 / NRRL Y-1056) (Yeast)).